The following is a 98-amino-acid chain: uncharacterized protein (98 aa).

The protein belongs to the HesB/IscA family.

This is an uncharacterized protein from Staphylococcus epidermidis (strain ATCC 35984 / DSM 28319 / BCRC 17069 / CCUG 31568 / BM 3577 / RP62A).